The chain runs to 282 residues: Homeobox protein Hox-C12 (282 aa).

Disordered stretches follow at residues 94 to 129 (YYRE…PLEP) and 147 to 214 (GGDG…NSRS). Over residues 162–175 (SCQSLESDSSSSLL) the composition is skewed to low complexity. Residues 214–273 (SRKKRKPYSKLQLAELEGEFLVNEFITRQRRRELSDRLNLSDQQVKIWFQNRRMKKKRLL) constitute a DNA-binding region (homeobox).

Belongs to the Abd-B homeobox family.

Its subcellular location is the nucleus. Functionally, sequence-specific transcription factor which is part of a developmental regulatory system that provides cells with specific positional identities on the anterior-posterior axis. This Homo sapiens (Human) protein is Homeobox protein Hox-C12 (HOXC12).